A 176-amino-acid polypeptide reads, in one-letter code: Immunity factor for TNT homolog (176 aa).

As to quaternary structure, interacts with the tuberculosis necrotizing toxin (TNT) homolog, the C-terminal domain of the outer membrane channel protein CpnT.

Functionally, antitoxin for tuberculosis necrotizing toxin (TNT) homolog. Acts by binding directly to TNT, which inhibits NAD(+) glycohydrolase activity of TNT and protects M.bovis from self-poisoning. The polypeptide is Immunity factor for TNT homolog (Mycobacterium bovis (strain BCG / Pasteur 1173P2)).